A 467-amino-acid chain; its full sequence is Asparagine--tRNA ligase (467 aa).

The protein belongs to the class-II aminoacyl-tRNA synthetase family. In terms of assembly, homodimer.

The protein localises to the cytoplasm. The enzyme catalyses tRNA(Asn) + L-asparagine + ATP = L-asparaginyl-tRNA(Asn) + AMP + diphosphate + H(+). The sequence is that of Asparagine--tRNA ligase from Bacteroides fragilis (strain YCH46).